We begin with the raw amino-acid sequence, 346 residues long: Heat-inducible transcription repressor HrcA (346 aa).

This sequence belongs to the HrcA family.

Functionally, negative regulator of class I heat shock genes (grpE-dnaK-dnaJ and groELS operons). Prevents heat-shock induction of these operons. This is Heat-inducible transcription repressor HrcA from Kineococcus radiotolerans (strain ATCC BAA-149 / DSM 14245 / SRS30216).